Here is a 429-residue protein sequence, read N- to C-terminus: Gamma-glutamyl phosphate reductase (429 aa).

The protein belongs to the gamma-glutamyl phosphate reductase family.

It is found in the cytoplasm. It carries out the reaction L-glutamate 5-semialdehyde + phosphate + NADP(+) = L-glutamyl 5-phosphate + NADPH + H(+). The protein operates within amino-acid biosynthesis; L-proline biosynthesis; L-glutamate 5-semialdehyde from L-glutamate: step 2/2. Catalyzes the NADPH-dependent reduction of L-glutamate 5-phosphate into L-glutamate 5-semialdehyde and phosphate. The product spontaneously undergoes cyclization to form 1-pyrroline-5-carboxylate. The chain is Gamma-glutamyl phosphate reductase from Rhizorhabdus wittichii (strain DSM 6014 / CCUG 31198 / JCM 15750 / NBRC 105917 / EY 4224 / RW1) (Sphingomonas wittichii).